The following is a 164-amino-acid chain: Large ribosomal subunit protein eL24z (164 aa).

A compositionally biased stretch (basic and acidic residues) spans glutamate 117–tyrosine 133. Residues glutamate 117 to arginine 164 are disordered.

The protein belongs to the eukaryotic ribosomal protein eL24 family. In terms of assembly, interacts with the cauliflower mosaic virus transactivator TAV to form a TAV/60S complex. Interacts with REIL1 AND REIL2.

Its function is as follows. Might have an extraribosomal function in reinitiation of translation. The sequence is that of Large ribosomal subunit protein eL24z (RPL24A) from Arabidopsis thaliana (Mouse-ear cress).